The primary structure comprises 178 residues: Meiotically up-regulated gene 95 protein (178 aa).

At 1-12 (MNLFVYIAQNPT) the chain is on the cytoplasmic side. Residues 13 to 30 (LTKWFFCCVCTILTMPFF) form a helical; Signal-anchor for type II membrane protein membrane-spanning segment. At 31–178 (KKPYRKRGIS…ESIEKPENDN (148 aa)) the chain is on the lumenal side.

The protein localises to the endoplasmic reticulum membrane. Functionally, has a role in meiosis. This chain is Meiotically up-regulated gene 95 protein (mug95), found in Schizosaccharomyces pombe (strain 972 / ATCC 24843) (Fission yeast).